The primary structure comprises 224 residues: Deoxyribose-phosphate aldolase (224 aa).

The active-site Proton donor/acceptor is the D92. The active-site Schiff-base intermediate with acetaldehyde is the K154. K183 serves as the catalytic Proton donor/acceptor.

It belongs to the DeoC/FbaB aldolase family. DeoC type 1 subfamily.

It localises to the cytoplasm. It catalyses the reaction 2-deoxy-D-ribose 5-phosphate = D-glyceraldehyde 3-phosphate + acetaldehyde. The protein operates within carbohydrate degradation; 2-deoxy-D-ribose 1-phosphate degradation; D-glyceraldehyde 3-phosphate and acetaldehyde from 2-deoxy-alpha-D-ribose 1-phosphate: step 2/2. Its function is as follows. Catalyzes a reversible aldol reaction between acetaldehyde and D-glyceraldehyde 3-phosphate to generate 2-deoxy-D-ribose 5-phosphate. The chain is Deoxyribose-phosphate aldolase from Actinobacillus succinogenes (strain ATCC 55618 / DSM 22257 / CCUG 43843 / 130Z).